The sequence spans 288 residues: Centromere protein P (288 aa).

A coiled-coil region spans residues 1–71 (MDAELAEVRA…HLESELSFLS (71 aa)). Phosphoserine is present on serine 38.

The protein belongs to the CENP-P/CTF19 family. In terms of assembly, component of the CENPA-CAD complex, composed of CENPI, CENPK, CENPL, CENPO, CENPP, CENPQ, CENPR and CENPS. The CENPA-CAD complex interacts with the CENPA-NAC complex, at least composed of CENPA, CENPC, CENPH, CENPM, CENPN, CENPT and CENPU.

Its subcellular location is the nucleus. It is found in the chromosome. It localises to the centromere. Its function is as follows. Component of the CENPA-CAD (nucleosome distal) complex, a complex recruited to centromeres which is involved in assembly of kinetochore proteins, mitotic progression and chromosome segregation. May be involved in incorporation of newly synthesized CENPA into centromeres via its interaction with the CENPA-NAC complex. This chain is Centromere protein P (CENPP), found in Homo sapiens (Human).